The following is a 300-amino-acid chain: Kynurenine formamidase (300 aa).

An HGGXW motif is present at residues 86 to 90 (HGGYW). Residue Ser-157 is the Nucleophile of the active site. Catalysis depends on residues Asp-244 and His-276.

It belongs to the kynurenine formamidase family. As to quaternary structure, homodimer.

It catalyses the reaction N-formyl-L-kynurenine + H2O = L-kynurenine + formate + H(+). It functions in the pathway amino-acid degradation; L-tryptophan degradation via kynurenine pathway; L-kynurenine from L-tryptophan: step 2/2. Its function is as follows. Catalyzes the hydrolysis of N-formyl-L-kynurenine to L-kynurenine, the second step in the kynurenine pathway of tryptophan degradation. Required for elimination of toxic metabolites. This is Kynurenine formamidase (KFase) from Drosophila melanogaster (Fruit fly).